The following is a 474-amino-acid chain: Catalase (474 aa).

Catalysis depends on residues H52 and N124. Y334 provides a ligand contact to heme.

It belongs to the catalase family. Heme is required as a cofactor.

It carries out the reaction 2 H2O2 = O2 + 2 H2O. Decomposes hydrogen peroxide into water and oxygen; serves to protect cells from the toxic effects of hydrogen peroxide. The chain is Catalase (katA) from Campylobacter jejuni subsp. jejuni serotype O:2 (strain ATCC 700819 / NCTC 11168).